Reading from the N-terminus, the 462-residue chain is Annexin A7 (462 aa).

Positions 1–130 (MSYPPNQGYP…QGYPPQQGYP (130 aa)) are disordered. The segment at 7–131 (QGYPPQSNSP…GYPPQQGYPP (125 aa)) is 19 X 6 AA tandem repeats of Q-G-Y-P-P-Q. Positions 16 to 130 (PQPGQYGAPQ…QGYPPQQGYP (115 aa)) are enriched in low complexity. 4 Annexin repeats span residues 161–232 (HDCK…ALLT), 233–304 (EPAH…KLTE), 315–388 (MQVS…AIVT), and 392–462 (NPYG…DIIS).

The protein belongs to the annexin family.

Functionally, calcium/phospholipid-binding protein which promotes membrane fusion and is involved in exocytosis. The protein is Annexin A7 (nxnA) of Dictyostelium discoideum (Social amoeba).